A 235-amino-acid polypeptide reads, in one-letter code: Kinetochore protein Spc25 (235 aa).

Residues lysine 44–threonine 106 are a coiled coil. The interval glutamate 193–asparagine 216 is disordered.

This sequence belongs to the SPC25 family. Component of the Ndc80 complex, which is composed of Ndc80, Nuf2 and Spc25.

It localises to the nucleus. It is found in the chromosome. The protein resides in the centromere. Its subcellular location is the kinetochore. Functionally, acts as a component of the essential kinetochore-associated Ndc80 complex, which is required for chromosome segregation and spindle checkpoint activity during meiosis and mitosis. Required for kinetochore integrity and the organization of stable microtubule binding sites in the outer plate of the kinetochore. Participates in SAC signaling that responds specifically to disruptions in spindle microtubule dynamics. The NDC80 complex synergistically enhances the affinity of the SKA1 complex for microtubules and may allow the NDC80 complex to track depolymerizing microtubules. The chain is Kinetochore protein Spc25 from Drosophila pseudoobscura pseudoobscura (Fruit fly).